Reading from the N-terminus, the 122-residue chain is UPF0382 membrane protein SE_0353 (122 aa).

The next 4 membrane-spanning stretches (helical) occupy residues 3-23 (VFIILGALNAMMAVGTGAFGA), 46-66 (MYHGLGLLVIGLISGTTSINV), 69-89 (AGWLLFFGIVFFSGSLYFLAL), and 98-118 (ITPIGGVLFIIGWLVLVIATL).

It belongs to the UPF0382 family.

Its subcellular location is the cell membrane. In Staphylococcus epidermidis (strain ATCC 12228 / FDA PCI 1200), this protein is UPF0382 membrane protein SE_0353.